We begin with the raw amino-acid sequence, 898 residues long: Chloride channel protein 2 (898 aa).

Position 2 is an N-acetylalanine (Ala-2). Residues 2–87 are Cytoplasmic-facing; sequence AAAAAEEGME…RCHKFLVSRV (86 aa). Positions 16–34 are essential for channel gating by both voltage and cell volume; the sequence is QYEQTLMYGRYTQDLGAFA. A Phosphothreonine modification is found at Thr-20. The interval 36 to 49 is modulates channel gating by both voltage and cell volume; the sequence is EEAARIRLGGPEPW. The next 2 membrane-spanning stretches (helical) occupy residues 88 to 121 and 130 to 155; these read GEDW…AQQW and ILLQ…TQIL. The Selectivity filter part_1 signature appears at 161 to 165; that stretch reads GSGIP. A chloride-binding site is contributed by Ser-162. Positions 164-171 form an intramembrane region, helical; that stretch reads IPEMKTIL. 2 helical membrane-spanning segments follow: residues 180-198 and 205-223; these read LTLK…ALGS and EGPF…SKFL. A Selectivity filter part_2 motif is present at residues 203 to 207; that stretch reads GKEGP. 2 consecutive intramembrane regions (helical) follow at residues 239–251 and 255–263; these read MLAA…VGCC and PIGGVLFSI. 5 helical membrane-spanning segments follow: residues 275–295, 321–349, 358–377, 429–449, and 457–480; these read YWRG…LAVW, LPAF…VQVM, FLMR…ISTL, ANVF…SALA, and GAFM…MAAW. The short motif at 457-461 is the Selectivity filter part_3 element; sequence GAFMP. Phe-459 contacts chloride. Residues 497–511 constitute an intramembrane region (helical); that stretch reads GGYAVVGAAALAGAV. Residues 512 to 513 constitute an intramembrane region (note=Loop between two helices); sequence TH. Residues 514–525 constitute an intramembrane region (helical); it reads TVSTAVIVFELT. An intramembrane region (note=Loop between two helices) is located at residues 526 to 530; that stretch reads GQIAH. A helical transmembrane segment spans residues 531 to 548; it reads ILPVMIAVILANAVAQSL. The Cytoplasmic segment spans residues 549-898; sequence QPSLYDSIIR…SPSDSDDKCQ (350 aa). Residue Tyr-553 coordinates chloride. The CBS 1 domain maps to 584-642; sequence MVRDVPHVALSCTFRDLRLALHRTKGRMLALVESPESMILLGSIERSQVVALLGAQLSP. 2 disordered regions span residues 643–672 and 686–717; these read ARRR…PEAS and AARG…TGSA. The span at 705–717 shows a compositional bias: polar residues; it reads VTRNLGESPTGSA. Phosphoserine occurs at positions 712 and 758. Positions 790-850 constitute a CBS 2 domain; it reads IDPAPFQLVE…GSVTAQGVKV (61 aa). The short motif at 812 to 813 is the Basolateral membrane sorting element; that stretch reads LL. A disordered region spans residues 856-898; it reads SFRDSATSSSDTETTEVHALWGPHSRHGLPREGSPSDSDDKCQ.

It belongs to the chloride channel (TC 2.A.49) family. ClC-2/CLCN2 subfamily. In terms of assembly, homodimer. Interacts with auxiliary subunit HEPACAM. In terms of processing, phosphorylated. Activated by dephosphorylation. As to expression, ubiquitously expressed. Moderately expressed in aortic and coronary vascular smooth muscle cells and expressed at a low level in aortic endothelial cells. Expressed in the adrenal gland, predominantly in the zona glomerulosa. Expressed in white mater perivascular astrocytes and ependymal cells (at protein level).

The protein resides in the cell membrane. It is found in the basolateral cell membrane. The protein localises to the cell projection. Its subcellular location is the dendritic spine membrane. It localises to the axon. The enzyme catalyses chloride(in) = chloride(out). It carries out the reaction thiocyanate(in) = thiocyanate(out). It catalyses the reaction bromide(in) = bromide(out). The catalysed reaction is nitrate(in) = nitrate(out). The enzyme catalyses iodide(out) = iodide(in). Common gate kinetics are down-regulated by intracellular ATP. Inhibited by AK-42, a derivative of meclofenamate. Inhibited by Cd(2+). Inhibited by Zn(2+) and PKC activation. Inhibited at acidic pH. CCLN2:HEPACAM channel conductance is up-regulated upon hypo-osmolarity. In terms of biological role, voltage-gated and osmosensitive chloride channel. Forms a homodimeric channel where each subunit has its own ion conduction pathway. Conducts double-barreled currents controlled by two types of gates, two fast glutamate gates that control each subunit independently and a slow common gate that opens and shuts off both subunits simultaneously. Displays inward rectification currents activated upon membrane hyperpolarization and extracellular hypotonicity. Contributes to chloride conductance involved in neuron excitability. In hippocampal neurons, generates a significant part of resting membrane conductance and provides an additional chloride efflux pathway to prevent chloride accumulation in dendrites upon GABA receptor activation. In glia, associates with the auxiliary subunit HEPACAM/GlialCAM at astrocytic processes and myelinated fiber tracts where it may regulate transcellular chloride flux buffering extracellular chloride and potassium concentrations. Regulates aldosterone production in adrenal glands. The opening of CLCN2 channels at hyperpolarized membrane potentials in the glomerulosa causes cell membrane depolarization, activation of voltage-gated calcium channels and increased expression of aldosterone synthase, the rate-limiting enzyme for aldosterone biosynthesis. Contributes to chloride conductance in retinal pigment epithelium involved in phagocytosis of shed photoreceptor outer segments and photoreceptor renewal. Conducts chloride currents at the basolateral membrane of epithelial cells with a role in chloride reabsorption rather than secretion. Permeable to small monovalent anions with chloride &gt; thiocyanate &gt; bromide &gt; nitrate &gt; iodide ion selectivity. This is Chloride channel protein 2 from Homo sapiens (Human).